The primary structure comprises 226 residues: MYELKENPYPMQPRERLEFLGEECLSDVELLAILLRTGTKKYSSLNLALEILQHFETLDNLRKASINELREISGIGLAKSIEIRAMIEFGKRIQTTNRKRYGQVLSSREYGLSLAFEMQNFEQEHLVATYLDGQNRIIEKKTIFIGAVNQATASPREILYHAIKNLSVGLLVAHNHPSGNLKPSQADKIFTTKIKKSCEDVGINFIDHIIVGAGNYFSFREEEIRK.

One can recognise an MPN domain in the interval 103-225; sequence QVLSSREYGL…YFSFREEEIR (123 aa). Residues H174, H176, and D187 each coordinate Zn(2+). The JAMM motif signature appears at 174-187; that stretch reads HNHPSGNLKPSQAD.

The protein belongs to the UPF0758 family.

This Lactococcus lactis subsp. lactis (strain IL1403) (Streptococcus lactis) protein is UPF0758 protein LL1007.